The chain runs to 432 residues: Metacaspase-1 (432 aa).

2 stretches are compositionally biased toward low complexity: residues 1–14 and 29–59; these read MYPGSGRYTYNNAG and QQYGQQYGQQYEQQYGQQYGQQNDQQFSQQY. Positions 1 to 70 are disordered; that stretch reads MYPGSGRYTY…PPPGPPPMAY (70 aa). Positions 60-70 are enriched in pro residues; it reads APPPGPPPMAY. Catalysis depends on residues His220 and Cys276.

This sequence belongs to the peptidase C14B family.

Its subcellular location is the cytoplasm. The protein localises to the nucleus. Functionally, mediates cell death (apoptosis) triggered by oxygen stress, salt stress or chronological aging. Regulated cell death can prevent a release of toxic cellular components, thus avoiding necrotic collapse of the colony, and can also provide nutrients for healthy cells. Therefore, regulated cell death in yeast colonies can be as important for their development as are apoptosis and related processes that occur within metazoa. In Saccharomyces cerevisiae (strain YJM789) (Baker's yeast), this protein is Metacaspase-1 (MCA1).